Consider the following 82-residue polypeptide: Turripeptide IX-04 (82 aa).

Residues 1 to 21 (MGFYMLLTVALLLTSLMNVEA) form the signal peptide. Positions 22 to 39 (TPVDQAERSALEKSGLGN) are excised as a propeptide. Disulfide bonds link Cys-48–Cys-70, Cys-55–Cys-74, and Cys-60–Cys-81.

In terms of tissue distribution, expressed by the venom duct.

Its subcellular location is the secreted. The sequence is that of Turripeptide IX-04 from Gemmula speciosa (Splendid gem-turris).